The primary structure comprises 208 residues: High frequency lysogenization protein HflD homolog (208 aa).

This sequence belongs to the HflD family.

The protein resides in the cytoplasm. Its subcellular location is the cell inner membrane. The chain is High frequency lysogenization protein HflD homolog from Yersinia pestis bv. Antiqua (strain Nepal516).